Here is a 918-residue protein sequence, read N- to C-terminus: GPI ethanolamine phosphate transferase 3 (918 aa).

A helical membrane pass occupies residues 16–36; that stretch reads IGTWKYIQACIFFAIILISNF. 5 N-linked (GlcNAc...) asparagine glycosylation sites follow: N54, N71, N101, N197, and N399. Transmembrane regions (helical) follow at residues 429–449, 459–479, 486–506, 523–543, 547–563, 567–587, 616–636, 651–671, 687–707, 715–735, 738–758, 762–782, 813–833, 853–873, and 887–907; these read LFPMIIGFLLLIIGGFNLALL, MSANMAPSVMKCLPVCLILIL, SPFPAEFYVLLPSFYILLNSF, FSIFITFLHVCSFGSNSFTVW, LCHFLIITIGLVMFCKC, MSPLFACSTYSALAFILLQVI, TLIVLALMALSSIILPLILQL, LSILYFFELISSIFWIAHHVF, SLANTYVICILGVLIWQFFLL, INVIERSYFVFALLYSFLSFL, PLGHLSLFSCFLQILLLIQLK, PSVGHNFFSVTLGLLGLSHFF, IFMFLHTVGAPILTCISIPLF, FSFILYNLLISTSTVFFAGFF, and FMLSGILLVTHQLFVLIQCFG.

It belongs to the PIGG/PIGN/PIGO family. PIGO subfamily. Glycosylated.

The protein resides in the endoplasmic reticulum membrane. It functions in the pathway glycolipid biosynthesis; glycosylphosphatidylinositol-anchor biosynthesis. Functionally, involved in glycosylphosphatidylinositol-anchor biosynthesis. Transfers ethanolamine phosphate to the GPI third mannose which links the GPI-anchor to the C-terminus of the proteins by an amide bond. Involved in cell wall biosynthesis. This is GPI ethanolamine phosphate transferase 3 (gpi13) from Schizosaccharomyces pombe (strain 972 / ATCC 24843) (Fission yeast).